A 295-amino-acid polypeptide reads, in one-letter code: Threonine/homoserine exporter RhtA (295 aa).

Residues 1-7 (MPGSTRK) lie on the Cytoplasmic side of the membrane. The helical transmembrane segment at 8–28 (LPVWLPILVLLIAMSSIQSGA) threads the bilayer. Topologically, residues 29–38 (SLAKSLFPLV) are periplasmic. Positions 30 to 135 (LAKSLFPLVG…VLAVLGLWFL (106 aa)) constitute an EamA 1 domain. The chain crosses the membrane as a helical span at residues 39–59 (GAPGVTALRLALGTLILIAFF). Topologically, residues 60-71 (KPWRLRFAKEQR) are cytoplasmic. Residues 72–92 (LPLLFYGLSLGGMNYLFYLSI) traverse the membrane as a helical segment. Q93 is a topological domain (periplasmic). The chain crosses the membrane as a helical span at residues 94-114 (TVPLGIAVALEFTGPLAVALF). The Cytoplasmic portion of the chain corresponds to 115–118 (SSRR). A helical membrane pass occupies residues 119–139 (PVDFIWVVLAVLGLWFLLPLG). Residues 140–146 (QDMSHVD) lie on the Periplasmic side of the membrane. A helical transmembrane segment spans residues 147–167 (LTGAALALGAGACWAVYILTG). The region spanning 159–278 (CWAVYILTGQ…LCAIIAASMG (120 aa)) is the EamA 2 domain. The Cytoplasmic portion of the chain corresponds to 168-175 (QRAGAEHG). The helical transmembrane segment at 176–196 (PATVAVGSLIAAIIFVPIGAV) threads the bilayer. Over 197–200 (QAGD) the chain is Periplasmic. The helical transmembrane segment at 201–221 (ALWHWSILPLGLAVAVLSTAL) threads the bilayer. At 222–237 (PYSLEMIALTRLPTRT) the chain is on the cytoplasmic side. The chain crosses the membrane as a helical span at residues 238-258 (FGTLMSMEPALAAVSGMIFLG). Topologically, residues 259-262 (ETLT) are periplasmic. A helical membrane pass occupies residues 263 to 283 (GIQILALCAIIAASMGSTLTI). Topologically, residues 284 to 295 (RREPQIKQVDVK) are cytoplasmic.

The protein belongs to the drug/metabolite transporter (DMT) superfamily. 10 TMS drug/metabolite exporter (DME) (TC 2.A.7.3) family.

The protein resides in the cell inner membrane. In terms of biological role, involved in the efflux of threonine and homoserine. This is Threonine/homoserine exporter RhtA (rhtA) from Salmonella typhimurium (strain SL1344).